Reading from the N-terminus, the 473-residue chain is Mediator of RNA polymerase II transcription subunit 29 (473 aa).

A compositionally biased stretch (polar residues) spans 1–12 (MSGQGPPSNLTP). Disordered regions lie at residues 1 to 319 (MSGQ…NEEQ) and 444 to 473 (STME…EMAE). Low complexity predominate over residues 13–50 (QQQHMIMQQQQQQQMMRQQQIQQQQLHQRQLQQQQAQQ). Polar residues predominate over residues 51–62 (SYQRSRTPQMQQ). Low complexity-rich tracts occupy residues 111–123 (QMMQ…NQPM) and 130–139 (VSRPGSVAPP). Polar residues-rich tracts occupy residues 148 to 183 (TGPS…QQSH) and 255 to 269 (PPGS…QPGS). Low complexity-rich tracts occupy residues 272-286 (APGS…QPPA) and 294-308 (AASG…AAPA).

This sequence belongs to the Mediator complex subunit 29 family. Component of the Mediator complex.

The protein localises to the nucleus. Its function is as follows. Component of the Mediator complex, a coactivator involved in the regulated transcription of nearly all RNA polymerase II-dependent genes. Mediator functions as a bridge to convey information from gene-specific regulatory proteins to the basal RNA polymerase II transcription machinery. Mediator is recruited to promoters by direct interactions with regulatory proteins and serves as a scaffold for the assembly of a functional preinitiation complex with RNA polymerase II and the general transcription factors. This Caenorhabditis briggsae protein is Mediator of RNA polymerase II transcription subunit 29 (mdt-29).